The primary structure comprises 433 residues: Enolase (433 aa).

Gln167 is a binding site for (2R)-2-phosphoglycerate. Glu209 serves as the catalytic Proton donor. The Mg(2+) site is built by Asp246, Glu291, and Asp318. (2R)-2-phosphoglycerate-binding residues include Lys343, Arg372, Ser373, and Lys394. The active-site Proton acceptor is Lys343.

This sequence belongs to the enolase family. As to quaternary structure, component of the RNA degradosome, a multiprotein complex involved in RNA processing and mRNA degradation. Requires Mg(2+) as cofactor.

The protein resides in the cytoplasm. It localises to the secreted. The protein localises to the cell surface. The enzyme catalyses (2R)-2-phosphoglycerate = phosphoenolpyruvate + H2O. The protein operates within carbohydrate degradation; glycolysis; pyruvate from D-glyceraldehyde 3-phosphate: step 4/5. Functionally, catalyzes the reversible conversion of 2-phosphoglycerate (2-PG) into phosphoenolpyruvate (PEP). It is essential for the degradation of carbohydrates via glycolysis. The chain is Enolase from Photobacterium profundum (strain SS9).